Reading from the N-terminus, the 861-residue chain is E3 ubiquitin-protein ligase HECTD3 (861 aa).

N-acetylalanine is present on Ala2. Ser12 is subject to Phosphoserine. A DOC domain is found at 219–397 (DEDLIHFLYD…TSLVRYPRLE (179 aa)). Positions 512–857 (YEKPLDYRWP…NCVAIDTDMS (346 aa)) constitute an HECT domain. The active-site Glycyl thioester intermediate is Cys823.

Interacts with TRIOBP. Interacts with STX8.

The protein localises to the cytoplasm. Its subcellular location is the perinuclear region. The enzyme catalyses S-ubiquitinyl-[E2 ubiquitin-conjugating enzyme]-L-cysteine + [acceptor protein]-L-lysine = [E2 ubiquitin-conjugating enzyme]-L-cysteine + N(6)-ubiquitinyl-[acceptor protein]-L-lysine.. It participates in protein modification; protein ubiquitination. Functionally, E3 ubiquitin ligases accepts ubiquitin from an E2 ubiquitin-conjugating enzyme in the form of a thioester and then directly transfers the ubiquitin to targeted substrates. Mediates ubiquitination of TRIOBP and its subsequent proteasomal degradation, thus facilitating cell cycle progression by regulating the turn-over of TRIOBP. Mediates also ubiquitination of STX8. The chain is E3 ubiquitin-protein ligase HECTD3 (HECTD3) from Homo sapiens (Human).